A 290-amino-acid polypeptide reads, in one-letter code: Cbb3-type cytochrome c oxidase subunit CcoP (290 aa).

Residues 1–22 (MSVKPTKQKPGEPPTTGHSWDG) form a disordered region. Residues 1–37 (MSVKPTKQKPGEPPTTGHSWDGIEEFDNPMPRWWLWT) lie on the Cytoplasmic side of the membrane. Residues 38–58 (FYVTIVWAIGYSILYPAWPLI) traverse the membrane as a helical segment. Topologically, residues 59–290 (NGATNGLIGH…VYVHGLGGGE (232 aa)) are periplasmic. Cytochrome c domains follow at residues 109–199 (YATN…LQIS) and 206–287 (ALSA…HGLG). Cys122, Cys125, His126, Met174, Cys219, Cys222, His223, and Met264 together coordinate heme c.

The protein belongs to the CcoP / FixP family. In terms of assembly, component of the cbb3-type cytochrome c oxidase at least composed of CcoN, CcoO, CcoQ and CcoP. Heme c is required as a cofactor.

It localises to the cell inner membrane. The protein operates within energy metabolism; oxidative phosphorylation. Its function is as follows. C-type cytochrome. Part of the cbb3-type cytochrome c oxidase complex. CcoP subunit is required for transferring electrons from donor cytochrome c via its heme groups to CcoO subunit. From there, electrons are shuttled to the catalytic binuclear center of CcoN subunit where oxygen reduction takes place. The complex also functions as a proton pump. The protein is Cbb3-type cytochrome c oxidase subunit CcoP of Cereibacter sphaeroides (strain ATCC 17023 / DSM 158 / JCM 6121 / CCUG 31486 / LMG 2827 / NBRC 12203 / NCIMB 8253 / ATH 2.4.1.) (Rhodobacter sphaeroides).